Here is a 338-residue protein sequence, read N- to C-terminus: Anthranilate phosphoribosyltransferase (338 aa).

Residues G81, G84 to D85, S89, N91 to T94, K109 to S117, and A121 each bind 5-phospho-alpha-D-ribose 1-diphosphate. Residue G81 participates in anthranilate binding. Position 93 (S93) interacts with Mg(2+). Residue N112 coordinates anthranilate. R167 contacts anthranilate. Mg(2+) contacts are provided by D226 and E227.

This sequence belongs to the anthranilate phosphoribosyltransferase family. In terms of assembly, homodimer. Requires Mg(2+) as cofactor.

It carries out the reaction N-(5-phospho-beta-D-ribosyl)anthranilate + diphosphate = 5-phospho-alpha-D-ribose 1-diphosphate + anthranilate. The protein operates within amino-acid biosynthesis; L-tryptophan biosynthesis; L-tryptophan from chorismate: step 2/5. Catalyzes the transfer of the phosphoribosyl group of 5-phosphorylribose-1-pyrophosphate (PRPP) to anthranilate to yield N-(5'-phosphoribosyl)-anthranilate (PRA). The sequence is that of Anthranilate phosphoribosyltransferase from Rhodopseudomonas palustris (strain ATCC BAA-98 / CGA009).